We begin with the raw amino-acid sequence, 516 residues long: RxLR effector protein PITG_15127 (516 aa).

The first 22 residues, 1–22 (MRLYSGAILCTIATLLISVSTA), serve as a signal peptide directing secretion. Residues 48 to 63 (RFLRVSTQNTENGENR) carry the RxLR-dEER motif.

This sequence belongs to the RxLR effector family.

The protein resides in the secreted. Its subcellular location is the host cell membrane. The protein localises to the host nucleus. It is found in the host cytoplasm. Its function is as follows. Effector that enhances P.infestans colonization of Nicotiana benthamiana leaves. This chain is RxLR effector protein PITG_15127, found in Phytophthora infestans (strain T30-4) (Potato late blight agent).